Reading from the N-terminus, the 198-residue chain is Recombination protein RecR (198 aa).

The C4-type zinc finger occupies 58–73 (CSICGNYTDSDPCAIC). One can recognise a Toprim domain in the interval 81–175 (SIICVIEQPK…KVTRIAHGVP (95 aa)).

Belongs to the RecR family.

In terms of biological role, may play a role in DNA repair. It seems to be involved in an RecBC-independent recombinational process of DNA repair. It may act with RecF and RecO. This is Recombination protein RecR from Clostridium novyi (strain NT).